A 66-amino-acid polypeptide reads, in one-letter code: Putative alpha-neurotoxin RjAa13 (66 aa).

The 60-residue stretch at 1–60 folds into the LCN-type CS-alpha/beta domain; sequence KEGYPVDWGNCKYECMSDAYCKDLCVDRKAKSGYCYKLNWSCYCEGLPDDSPIKTNGHCR. Disulfide bonds link cysteine 11/cysteine 59, cysteine 15/cysteine 35, cysteine 21/cysteine 42, and cysteine 25/cysteine 44.

This sequence belongs to the long (4 C-C) scorpion toxin superfamily. Sodium channel inhibitor family. Alpha subfamily. In terms of tissue distribution, expressed by the venom gland.

Its subcellular location is the secreted. Its function is as follows. Alpha toxins bind voltage-independently at site-3 of sodium channels (Nav) and inhibits the inactivation of the activated channels, thereby blocking neuronal transmission. The sequence is that of Putative alpha-neurotoxin RjAa13 from Rhopalurus junceus (Caribbean blue scorpion).